The sequence spans 98 residues: MSPLHFSFYSAFTFSSLGLAFHRTHLISALLCLESMMLSMFIPLSIWPVENQTPSFALVPILMLAFSACEAGTGLAMLVASARTHGSDHLHNLNLLQC.

Helical transmembrane passes span 1-21, 26-46, and 56-76; these read MSPL…GLAF, LISA…PLSI, and FALV…TGLA.

It belongs to the complex I subunit 4L family. Core subunit of respiratory chain NADH dehydrogenase (Complex I) which is composed of 45 different subunits.

The protein resides in the mitochondrion inner membrane. The catalysed reaction is a ubiquinone + NADH + 5 H(+)(in) = a ubiquinol + NAD(+) + 4 H(+)(out). In terms of biological role, core subunit of the mitochondrial membrane respiratory chain NADH dehydrogenase (Complex I) which catalyzes electron transfer from NADH through the respiratory chain, using ubiquinone as an electron acceptor. Part of the enzyme membrane arm which is embedded in the lipid bilayer and involved in proton translocation. In Gallus gallus (Chicken), this protein is NADH-ubiquinone oxidoreductase chain 4L (MT-ND4L).